Reading from the N-terminus, the 94-residue chain is Putative pterin-4-alpha-carbinolamine dehydratase (94 aa).

The protein belongs to the pterin-4-alpha-carbinolamine dehydratase family.

The catalysed reaction is (4aS,6R)-4a-hydroxy-L-erythro-5,6,7,8-tetrahydrobiopterin = (6R)-L-erythro-6,7-dihydrobiopterin + H2O. The polypeptide is Putative pterin-4-alpha-carbinolamine dehydratase (Chloroflexus aggregans (strain MD-66 / DSM 9485)).